Consider the following 216-residue polypeptide: uncharacterized protein (216 aa).

This is an uncharacterized protein from Methylophilus leisingeri (strain DSM 6813 / VKM B-2013 / DM11).